Reading from the N-terminus, the 189-residue chain is Interferon alpha-A (189 aa).

Residues 1–23 (MAPAWSFLLSLLLLSCNAICSLG) form the signal peptide. 2 disulfide bridges follow: Cys24–Cys122 and Cys52–Cys162.

The protein belongs to the alpha/beta interferon family.

It is found in the secreted. Its function is as follows. Produced by macrophages, IFN-alpha have antiviral activities. Interferon stimulates the production of two enzymes: a protein kinase and an oligoadenylate synthetase. This is Interferon alpha-A (IFNAA) from Bos taurus (Bovine).